The primary structure comprises 419 residues: Enolase (419 aa).

Gln161 contacts (2R)-2-phosphoglycerate. Residue Glu205 is the Proton donor of the active site. Asp240, Glu283, and Asp309 together coordinate Mg(2+). The (2R)-2-phosphoglycerate site is built by Lys334, Arg363, Ser364, and Lys385. Lys334 serves as the catalytic Proton acceptor.

Belongs to the enolase family. Requires Mg(2+) as cofactor.

It localises to the cytoplasm. Its subcellular location is the secreted. It is found in the cell surface. The enzyme catalyses (2R)-2-phosphoglycerate = phosphoenolpyruvate + H2O. It functions in the pathway carbohydrate degradation; glycolysis; pyruvate from D-glyceraldehyde 3-phosphate: step 4/5. In terms of biological role, catalyzes the reversible conversion of 2-phosphoglycerate (2-PG) into phosphoenolpyruvate (PEP). It is essential for the degradation of carbohydrates via glycolysis. The protein is Enolase of Saccharolobus solfataricus (strain ATCC 35092 / DSM 1617 / JCM 11322 / P2) (Sulfolobus solfataricus).